The sequence spans 238 residues: MFLARNVSRVALRSASLSPAAIPQQQHAGVAAVYAVRFASSSGSGRPADNWAESQKEKAKAGLKDAQAEVGKVAREVKDKAAGGIEQAKDAVKQGANDLKRSGSRTFENAKDDIQAKAQHAKSDLKGAKHQAEGVVENVKEAAENAWEKTKDVAENLKDKVQSPGGLADKAANAWETVKDRAQDAASEVKHKAGDLKDKAQQVIHDATTQSGDNRKQDQQQRRDSQGSQSGQNSRSRN.

Residues 41-62 (SSGSGRPADNWAESQKEKAKAG) are disordered. The stretch at 50 to 202 (NWAESQKEKA…AGDLKDKAQQ (153 aa)) forms a coiled coil. LEA 11-mer repeat repeat units follow at residues 64 to 74 (KDAQAEVGKVA), 89 to 99 (KDAVKQGANDL), 140 to 150 (KEAAENAWEKT), 151 to 161 (KDVAENLKDKV), 179 to 189 (KDRAQDAASEV), and 190 to 200 (KHKAGDLKDKA). Basic and acidic residues-rich tracts occupy residues 182-200 (AQDA…KDKA) and 213-225 (DNRK…RRDS). The tract at residues 182–238 (AQDAASEVKHKAGDLKDKAQQVIHDATTQSGDNRKQDQQQRRDSQGSQSGQNSRSRN) is disordered. Residues 226 to 238 (QGSQSGQNSRSRN) show a composition bias toward low complexity.

Belongs to the LEA type 4 family.

It is found in the mitochondrion. Mitochondrial heat soluble protein acting as a molecular shield in water-deficient condition. The polypeptide is Group 3 late-embryogenesis abundant protein, mitochondrial (Hypsibius exemplaris (Freshwater tardigrade)).